Consider the following 177-residue polypeptide: Nucleoside triphosphate/diphosphate phosphatase (177 aa).

R23 acts as the Proton donor in catalysis. The Mg(2+) site is built by N87, D103, D105, D107, D120, and E123.

This sequence belongs to the Ntdp family. Mg(2+) is required as a cofactor.

It carries out the reaction a ribonucleoside 5'-triphosphate + H2O = a ribonucleoside 5'-diphosphate + phosphate + H(+). The catalysed reaction is a ribonucleoside 5'-diphosphate + H2O = a ribonucleoside 5'-phosphate + phosphate + H(+). Has nucleoside phosphatase activity towards nucleoside triphosphates and nucleoside diphosphates. The chain is Nucleoside triphosphate/diphosphate phosphatase from Streptococcus agalactiae serotype Ia (strain ATCC 27591 / A909 / CDC SS700).